The sequence spans 333 residues: Ribonucleoside-diphosphate reductase small chain B (333 aa).

Positions 76, 107, and 110 each coordinate Fe cation. Residue Y114 is part of the active site. The Fe cation site is built by E169, E203, and H206.

The protein belongs to the ribonucleoside diphosphate reductase small chain family. As to quaternary structure, heterodimer of a large and a small chain. Fe cation serves as cofactor. As to expression, expressed in roots, rosette leaves, stems and flowers.

It localises to the cytoplasm. The catalysed reaction is a 2'-deoxyribonucleoside 5'-diphosphate + [thioredoxin]-disulfide + H2O = a ribonucleoside 5'-diphosphate + [thioredoxin]-dithiol. Its function is as follows. Provides the precursors necessary for DNA synthesis. Catalyzes the biosynthesis of deoxyribonucleotides from the corresponding ribonucleotides. In Arabidopsis thaliana (Mouse-ear cress), this protein is Ribonucleoside-diphosphate reductase small chain B (RNR2B).